Reading from the N-terminus, the 446-residue chain is Maturase K (446 aa).

It belongs to the intron maturase 2 family. MatK subfamily.

The protein resides in the plastid. Its subcellular location is the chloroplast. Usually encoded in the trnK tRNA gene intron. Probably assists in splicing its own and other chloroplast group II introns. The sequence is that of Maturase K from Phalaenopsis aphrodite subsp. formosana (Moth orchid).